Consider the following 235-residue polypeptide: Pro-opiomelanocortin (235 aa).

The signal sequence occupies residues 1–26; the sequence is MPRFCNSRSGALLLALLLQTSIDVWS. The residue at position 87 (Phe-87) is a Phenylalanine amide. A disordered region spans residues 88–128; the sequence is GPRNSSSAGGSAQRRAEEETAGGDGRPEPSPREGKRSYSME. Over residues 112–128 the composition is skewed to basic and acidic residues; the sequence is GRPEPSPREGKRSYSME. N-acetylserine; in Corticotropin is present on Ser-124. A Valine amide modification is found at Val-136. Residue Asn-152 is glycosylated (N-linked (GlcNAc...) asparagine). At Ser-154 the chain carries Phosphoserine. The segment at 169-209 is disordered; sequence EQPDGLEQVLEPDTEKADGPYRVEHFRWGNPPKDKRYGGFM. Residues 181–205 show a composition bias toward basic and acidic residues; it reads DTEKADGPYRVEHFRWGNPPKDKRY.

This sequence belongs to the POMC family. Specific enzymatic cleavages at paired basic residues yield the different active peptides. As to expression, ACTH and MSH are produced by the pituitary gland.

It localises to the secreted. Its function is as follows. Stimulates the adrenal glands to release cortisol. In terms of biological role, anorexigenic peptide. Increases the pigmentation of skin by increasing melanin production in melanocytes. Functionally, increases the pigmentation of skin by increasing melanin production in melanocytes. Endogenous orexigenic opiate. Its function is as follows. Endogenous opiate. The polypeptide is Pro-opiomelanocortin (Pomc) (Rattus norvegicus (Rat)).